Reading from the N-terminus, the 64-residue chain is Small ribosomal subunit protein eS17 (64 aa).

It belongs to the eukaryotic ribosomal protein eS17 family.

The sequence is that of Small ribosomal subunit protein eS17 from Methanosarcina acetivorans (strain ATCC 35395 / DSM 2834 / JCM 12185 / C2A).